The chain runs to 662 residues: DNA ligase (662 aa).

NAD(+) is bound by residues 31-35, 80-81, and E109; these read DYEYD and SL. K111 functions as the N6-AMP-lysine intermediate in the catalytic mechanism. Residues R132, E166, K282, and K306 each coordinate NAD(+). The Zn(2+) site is built by C400, C403, C418, and C423. Residues 581 to 662 form the BRCT domain; sequence KVSNIFEGKT…FEEMLKGENI (82 aa).

This sequence belongs to the NAD-dependent DNA ligase family. LigA subfamily. It depends on Mg(2+) as a cofactor. Mn(2+) serves as cofactor.

The enzyme catalyses NAD(+) + (deoxyribonucleotide)n-3'-hydroxyl + 5'-phospho-(deoxyribonucleotide)m = (deoxyribonucleotide)n+m + AMP + beta-nicotinamide D-nucleotide.. Its function is as follows. DNA ligase that catalyzes the formation of phosphodiester linkages between 5'-phosphoryl and 3'-hydroxyl groups in double-stranded DNA using NAD as a coenzyme and as the energy source for the reaction. It is essential for DNA replication and repair of damaged DNA. The protein is DNA ligase of Thermoanaerobacter sp. (strain X514).